A 180-amino-acid chain; its full sequence is Hypoxanthine-guanine phosphoribosyltransferase (180 aa).

GMP-binding positions include Lys-40, 99–107, Lys-131, and Asp-159; that span reads EDIVDSGLT. Asp-103 (proton acceptor) is an active-site residue. Asp-159 is a binding site for Mg(2+).

This sequence belongs to the purine/pyrimidine phosphoribosyltransferase family. It depends on Mg(2+) as a cofactor.

Its subcellular location is the cytoplasm. The enzyme catalyses IMP + diphosphate = hypoxanthine + 5-phospho-alpha-D-ribose 1-diphosphate. It carries out the reaction GMP + diphosphate = guanine + 5-phospho-alpha-D-ribose 1-diphosphate. It participates in purine metabolism; IMP biosynthesis via salvage pathway; IMP from hypoxanthine: step 1/1. Converts guanine to guanosine monophosphate, and hypoxanthine to inosine monophosphate. Transfers the 5-phosphoribosyl group from 5-phosphoribosylpyrophosphate onto the purine. Plays a central role in the generation of purine nucleotides through the purine salvage pathway. This Dictyostelium discoideum (Social amoeba) protein is Hypoxanthine-guanine phosphoribosyltransferase (hprT).